The sequence spans 366 residues: Aminomethyltransferase (366 aa).

This sequence belongs to the GcvT family. As to quaternary structure, the glycine cleavage system is composed of four proteins: P, T, L and H.

The catalysed reaction is N(6)-[(R)-S(8)-aminomethyldihydrolipoyl]-L-lysyl-[protein] + (6S)-5,6,7,8-tetrahydrofolate = N(6)-[(R)-dihydrolipoyl]-L-lysyl-[protein] + (6R)-5,10-methylene-5,6,7,8-tetrahydrofolate + NH4(+). Functionally, the glycine cleavage system catalyzes the degradation of glycine. This chain is Aminomethyltransferase, found in Moorella thermoacetica (strain ATCC 39073 / JCM 9320).